Consider the following 662-residue polypeptide: Eukaryotic peptide chain release factor GTP-binding subunit (662 aa).

A disordered region spans residues 1 to 220; the sequence is MASNQPNNGE…PATVTEDATD (220 aa). The segment covering 26–40 has biased composition (low complexity); it reads AKAPTFTPKAAPFIP. The segment covering 62–89 has biased composition (polar residues); sequence YTGQGQNSNSPHPTKSYQQYYQKPTGNT. Over residues 91–102 the composition is skewed to basic and acidic residues; it reads DEDKSRVPDFSK. Over residues 122–134 the composition is skewed to polar residues; the sequence is GGNTSAPKSTKPI. Residues 141–158 show a composition bias toward low complexity; it reads TKAPTTTKPAAPAAQSKT. Threonine 182 is modified (phosphothreonine). Over residues 192 to 213 the composition is skewed to low complexity; the sequence is AKTPSAPAAALKKAAEAAEPAT. A tr-type G domain is found at 236–464; it reads KEHVNIVFIG…LDSMTHLERK (229 aa). The tract at residues 245–252 is G1; it reads GHVDAGKS. 245–252 contacts GTP; sequence GHVDAGKS. A G2 region spans residues 301–305; it reads GKTVE. Residues 322–325 form a G3 region; sequence DAPG. Residues 384-387 and 428-429 each bind GTP; these read NKMD and AY. Positions 384-387 are G4; it reads NKMD. Positions 427–429 are G5; that stretch reads SAY. Serine 539 carries the post-translational modification Phosphoserine.

It belongs to the TRAFAC class translation factor GTPase superfamily. Classic translation factor GTPase family. ERF3 subfamily. Component of the eRF1-eRF3-GTP ternary complex, composed of sup45/eRF1, sup35/eRF3 and GTP.

Its subcellular location is the cytoplasm. It carries out the reaction GTP + H2O = GDP + phosphate + H(+). In terms of biological role, GTPase component of the eRF1-eRF3-GTP ternary complex, a ternary complex that mediates translation termination in response to the termination codons. Sup35/eRF3 mediates sup45/ERF1 delivery to stop codons: The eRF1-eRF3-GTP complex binds to a stop codon in the ribosomal A-site. GTP hydrolysis by sup35/eRF3 induces a conformational change that leads to its dissociation, permitting sup45/eRF1 to accommodate fully in the A-site. The protein is Eukaryotic peptide chain release factor GTP-binding subunit (sup35) of Schizosaccharomyces pombe (strain 972 / ATCC 24843) (Fission yeast).